A 382-amino-acid polypeptide reads, in one-letter code: Mannitol-1-phosphate 5-dehydrogenase (382 aa).

3-14 (AVHFGAGNIGRG) provides a ligand contact to NAD(+).

The protein belongs to the mannitol dehydrogenase family.

The enzyme catalyses D-mannitol 1-phosphate + NAD(+) = beta-D-fructose 6-phosphate + NADH + H(+). This chain is Mannitol-1-phosphate 5-dehydrogenase, found in Aliivibrio salmonicida (strain LFI1238) (Vibrio salmonicida (strain LFI1238)).